A 312-amino-acid polypeptide reads, in one-letter code: Olfactory receptor 10D3 (312 aa).

The Extracellular portion of the chain corresponds to 1-26 (MEVKNCCMVTEFILLGIPHTEGLEMT). The chain crosses the membrane as a helical span at residues 27–47 (LFVLFLPFYACTLLGNVSILV). Topologically, residues 48-57 (AVMSSARLHT) are cytoplasmic. Residues 58 to 78 (PMYFFLGNLSVFDMGFSSVTC) traverse the membrane as a helical segment. Residues 79 to 97 (PKMLLYLMGLSRLISYKDC) lie on the Extracellular side of the membrane. Cysteine 97 and cysteine 179 are disulfide-bonded. Residues 98–118 (VCQLFFFHFLGSIECFLFTVM) traverse the membrane as a helical segment. The Cytoplasmic segment spans residues 119-139 (AYDRFTAICYPLRYTVIMNPR). The chain crosses the membrane as a helical span at residues 140–160 (ICVALAVGTWLLGCIHSSILT). Over 161-197 (SLTFTLPYCGPNEVDHFFCDIPALLPLACADTSLAQR) the chain is Extracellular. Residues 198-218 (VSFTNVGLISLVCFLLILLSY) form a helical membrane-spanning segment. The Cytoplasmic portion of the chain corresponds to 219-239 (TRITISILSIRTTEGRRRAFS). The helical transmembrane segment at 240–260 (TCSAHLIAILCAYGPIITVYL) threads the bilayer. Over 261-266 (QPTPNP) the chain is Extracellular. Residues 267-287 (MLGTVVQILMNLVGPMLNPLI) traverse the membrane as a helical segment. Residues 288–312 (YTLRNKEVKTALKTILHRTGHVPES) are Cytoplasmic-facing.

Belongs to the G-protein coupled receptor 1 family.

The protein localises to the cell membrane. Odorant receptor. This is Olfactory receptor 10D3 from Homo sapiens (Human).